We begin with the raw amino-acid sequence, 278 residues long: Hydroxyethylthiazole kinase (278 aa).

M48 is a binding site for substrate. ATP contacts are provided by R124 and T175. Substrate is bound at residue G202.

This sequence belongs to the Thz kinase family. Mg(2+) serves as cofactor.

It catalyses the reaction 5-(2-hydroxyethyl)-4-methylthiazole + ATP = 4-methyl-5-(2-phosphooxyethyl)-thiazole + ADP + H(+). It participates in cofactor biosynthesis; thiamine diphosphate biosynthesis; 4-methyl-5-(2-phosphoethyl)-thiazole from 5-(2-hydroxyethyl)-4-methylthiazole: step 1/1. Its function is as follows. Catalyzes the phosphorylation of the hydroxyl group of 4-methyl-5-beta-hydroxyethylthiazole (THZ). The protein is Hydroxyethylthiazole kinase of Clostridium botulinum (strain Alaska E43 / Type E3).